A 218-amino-acid polypeptide reads, in one-letter code: GTP cyclohydrolase 1 (218 aa).

Residues cysteine 109, histidine 112, and cysteine 180 each coordinate Zn(2+).

Belongs to the GTP cyclohydrolase I family. Toroid-shaped homodecamer, composed of two pentamers of five dimers.

The catalysed reaction is GTP + H2O = 7,8-dihydroneopterin 3'-triphosphate + formate + H(+). Its pathway is cofactor biosynthesis; 7,8-dihydroneopterin triphosphate biosynthesis; 7,8-dihydroneopterin triphosphate from GTP: step 1/1. This is GTP cyclohydrolase 1 from Aeromonas hydrophila subsp. hydrophila (strain ATCC 7966 / DSM 30187 / BCRC 13018 / CCUG 14551 / JCM 1027 / KCTC 2358 / NCIMB 9240 / NCTC 8049).